The sequence spans 389 residues: DNA replication and repair protein RecF (389 aa).

Residue 30–37 (GPNGFGKT) coordinates ATP.

The protein belongs to the RecF family.

Its subcellular location is the cytoplasm. Its function is as follows. The RecF protein is involved in DNA metabolism; it is required for DNA replication and normal SOS inducibility. RecF binds preferentially to single-stranded, linear DNA. It also seems to bind ATP. The polypeptide is DNA replication and repair protein RecF (Mycolicibacterium gilvum (strain PYR-GCK) (Mycobacterium gilvum (strain PYR-GCK))).